A 286-amino-acid chain; its full sequence is Lipid phosphate phosphatase epsilon 2, chloroplastic (286 aa).

The N-terminal 60 residues, 1-60 (MAASSSSLLLLHKPTYNFHFAASSVPTYINSARFRISSSIFPLDRRRRRRIWSVSGFKSM), are a transit peptide targeting the chloroplast. The next 5 membrane-spanning stretches (helical) occupy residues 133–149 (LWAVIGSVSNSVLSVAL), 173–193 (AQSISFISVFSVFSVMEWLGT), 194–214 (NVLSLFLSGFILALGSYFTWL), 226–246 (VVVGAIVGSVYSTLWYVTWNS), and 260–280 (IALFLVAAASALGFAVYVLLN).

This sequence belongs to the PA-phosphatase related phosphoesterase family. Expressed in root tips, root branch points, cotyledons and leaves.

The protein localises to the plastid. It is found in the chloroplast inner membrane. Inhibited by Mg(2+). Its function is as follows. Exhibits phosphatidate phosphatase (PAP) activity in vitro. May play a secondary role as PAP in plastids. In Arabidopsis thaliana (Mouse-ear cress), this protein is Lipid phosphate phosphatase epsilon 2, chloroplastic (LPPE2).